A 254-amino-acid chain; its full sequence is Flagellar L-ring protein 1 (254 aa).

Positions 1-26 (MSPFSSAFRPRRIAISALLLAIGALA) are cleaved as a signal peptide.

It belongs to the FlgH family. In terms of assembly, the basal body constitutes a major portion of the flagellar organelle and consists of four rings (L,P,S, and M) mounted on a central rod.

The protein resides in the cell outer membrane. The protein localises to the bacterial flagellum basal body. Functionally, assembles around the rod to form the L-ring and probably protects the motor/basal body from shearing forces during rotation. The sequence is that of Flagellar L-ring protein 1 (flgH1) from Bradyrhizobium diazoefficiens (strain JCM 10833 / BCRC 13528 / IAM 13628 / NBRC 14792 / USDA 110).